A 647-amino-acid polypeptide reads, in one-letter code: Threonine--tRNA ligase (647 aa).

The TGS domain maps to 1–61 (MIKITFPDGA…EEDGSIEIVT (61 aa)). Positions 240-538 (DHRKLGKELD…LIETYKGAFP (299 aa)) are catalytic. Zn(2+) contacts are provided by Cys-334, His-385, and His-515.

It belongs to the class-II aminoacyl-tRNA synthetase family. As to quaternary structure, homodimer. The cofactor is Zn(2+).

The protein resides in the cytoplasm. It catalyses the reaction tRNA(Thr) + L-threonine + ATP = L-threonyl-tRNA(Thr) + AMP + diphosphate + H(+). Functionally, catalyzes the attachment of threonine to tRNA(Thr) in a two-step reaction: L-threonine is first activated by ATP to form Thr-AMP and then transferred to the acceptor end of tRNA(Thr). Also edits incorrectly charged L-seryl-tRNA(Thr). This is Threonine--tRNA ligase from Streptococcus agalactiae serotype V (strain ATCC BAA-611 / 2603 V/R).